The sequence spans 220 residues: MTQDEMKKAAGWAALKYVEEGSIVGVGTGSTVNHFIDALATMKDDIEGAVSSSEASTQKMKALGIPVYDLNSVDRLSVYVDGADEINDRMDMIKGGGAALTREKIVAAVAEKFICIVDNTKQVNILGEFPLPVEVIPMARSYVARQLVKLGGDPVYRQGVVTDNGNVILDVYNLKILNPKELESQINEIVGVVTNGLFAKRGADVLLVGTPDGVKTFTTK.

Residues 28–31, 81–84, and 94–97 each bind substrate; these read TGST, DGAD, and KGGG. Glu103 acts as the Proton acceptor in catalysis. Residue Lys121 participates in substrate binding.

This sequence belongs to the ribose 5-phosphate isomerase family. As to quaternary structure, homodimer.

It carries out the reaction aldehydo-D-ribose 5-phosphate = D-ribulose 5-phosphate. The protein operates within carbohydrate degradation; pentose phosphate pathway; D-ribose 5-phosphate from D-ribulose 5-phosphate (non-oxidative stage): step 1/1. In terms of biological role, catalyzes the reversible conversion of ribose-5-phosphate to ribulose 5-phosphate. This chain is Ribose-5-phosphate isomerase A, found in Shewanella sp. (strain W3-18-1).